The sequence spans 157 residues: Transcriptional repressor NrdR (157 aa).

The segment at 3 to 34 (CPHCHQNSSRVIDSRPTDEGRVIRRRRECENC) is a zinc-finger region. The region spanning 49 to 139 (LLVIKKNGTR…VYRQFKDMNV (91 aa)) is the ATP-cone domain.

This sequence belongs to the NrdR family. The cofactor is Zn(2+).

Negatively regulates transcription of bacterial ribonucleotide reductase nrd genes and operons by binding to NrdR-boxes. This Latilactobacillus sakei subsp. sakei (strain 23K) (Lactobacillus sakei subsp. sakei) protein is Transcriptional repressor NrdR.